The primary structure comprises 89 residues: uncharacterized protein (89 aa).

This is an uncharacterized protein from Archaeoglobus fulgidus (strain ATCC 49558 / DSM 4304 / JCM 9628 / NBRC 100126 / VC-16).